Reading from the N-terminus, the 238-residue chain is Uracil-DNA glycosylase (238 aa).

Asp81 acts as the Proton acceptor in catalysis.

It belongs to the uracil-DNA glycosylase (UDG) superfamily. UNG family.

It localises to the cytoplasm. It catalyses the reaction Hydrolyzes single-stranded DNA or mismatched double-stranded DNA and polynucleotides, releasing free uracil.. Excises uracil residues from the DNA which can arise as a result of misincorporation of dUMP residues by DNA polymerase or due to deamination of cytosine. In Corynebacterium efficiens (strain DSM 44549 / YS-314 / AJ 12310 / JCM 11189 / NBRC 100395), this protein is Uracil-DNA glycosylase.